Here is a 65-residue protein sequence, read N- to C-terminus: Large ribosomal subunit protein bL35 (65 aa).

It belongs to the bacterial ribosomal protein bL35 family.

The sequence is that of Large ribosomal subunit protein bL35 from Oleidesulfovibrio alaskensis (strain ATCC BAA-1058 / DSM 17464 / G20) (Desulfovibrio alaskensis).